A 750-amino-acid chain; its full sequence is Protein O-mannosyl-transferase 2 (750 aa).

Residues 1 to 23 (MPPATGGGLAESELRPRRGRCGP) form a disordered region. Serine 41 carries the post-translational modification Phosphoserine. A helical membrane pass occupies residues 54-74 (AVGWWALLALVTLLSFATRFH). Asparagine 98 carries N-linked (GlcNAc...) asparagine glycosylation. 5 consecutive transmembrane segments (helical) span residues 100-120 (TFFFDVHPPLGKMLIGLAGYL), 146-166 (GFCAFLGSWLVPFAYLTVLDL), 191-211 (QYILLDPILMFFIMAAMLSMV), 231-251 (LTGVSLAGALGVKFVGLFIIL), and 283-303 (VLCLIVLPLALYTATFAVHFM). Asparagine 330 carries N-linked (GlcNAc...) asparagine glycosylation. 3 consecutive MIR domains span residues 334–390 (PEHL…IKKH), 403–459 (VEFV…IEVV), and 464–521 (GNRI…VEDH). The N-linked (GlcNAc...) asparagine glycan is linked to asparagine 445. Asparagine 528 and asparagine 583 each carry an N-linked (GlcNAc...) asparagine glycan. 4 consecutive transmembrane segments (helical) span residues 596 to 616 (VVWWLNLLSIALYLLSGSIIA), 643 to 663 (VLLGWTLHYFPFFLMGRVLYF), 665 to 685 (HYFPAMLFSSMLTGILWDTLL), and 700 to 720 (GIHVAGILSLLLGTAYSFYLF).

It belongs to the glycosyltransferase 39 family. Interacts with POMT1. In terms of processing, N-glycosylated. In terms of tissue distribution, highly expressed in testis; detected at low levels in most tissues.

The protein resides in the endoplasmic reticulum membrane. The enzyme catalyses a di-trans,poly-cis-dolichyl beta-D-mannosyl phosphate + L-seryl-[protein] = 3-O-(alpha-D-mannosyl)-L-seryl-[protein] + a di-trans,poly-cis-dolichyl phosphate + H(+). It catalyses the reaction a di-trans,poly-cis-dolichyl beta-D-mannosyl phosphate + L-threonyl-[protein] = 3-O-(alpha-D-mannosyl)-L-threonyl-[protein] + a di-trans,poly-cis-dolichyl phosphate + H(+). It functions in the pathway protein modification; protein glycosylation. With respect to regulation, slightly activated by Mg(2+) and inhibited by both Ca(+) and Mn(2+). EDTA ha no effect on activity in vitro. In terms of biological role, transfers mannosyl residues to the hydroxyl group of serine or threonine residues. Coexpression of both POMT1 and POMT2 is necessary for enzyme activity, expression of either POMT1 or POMT2 alone is insufficient. Essentially dedicated to O-mannosylation of alpha-DAG1 and few other proteins but not of cadherins and protocaherins. The sequence is that of Protein O-mannosyl-transferase 2 (POMT2) from Homo sapiens (Human).